The primary structure comprises 251 residues: Geranylgeranylglyceryl phosphate synthase (251 aa).

Residues aspartate 25 and serine 54 each contribute to the Mg(2+) site. Sn-glycerol 1-phosphate contacts are provided by residues 173 to 179 (YLEAGSG), 204 to 205 (GG), and 226 to 227 (GT).

The protein belongs to the GGGP/HepGP synthase family. Group II subfamily. It depends on Mg(2+) as a cofactor.

The protein localises to the cytoplasm. It carries out the reaction sn-glycerol 1-phosphate + (2E,6E,10E)-geranylgeranyl diphosphate = sn-3-O-(geranylgeranyl)glycerol 1-phosphate + diphosphate. It participates in membrane lipid metabolism; glycerophospholipid metabolism. Functionally, prenyltransferase that catalyzes the transfer of the geranylgeranyl moiety of geranylgeranyl diphosphate (GGPP) to the C3 hydroxyl of sn-glycerol-1-phosphate (G1P). This reaction is the first ether-bond-formation step in the biosynthesis of archaeal membrane lipids. This Pyrococcus furiosus (strain ATCC 43587 / DSM 3638 / JCM 8422 / Vc1) protein is Geranylgeranylglyceryl phosphate synthase.